The following is a 305-amino-acid chain: 2-pyrone-4,6-dicarbaxylate hydrolase (305 aa).

Substrate-binding positions include 32–34 (HCH), Tyr50, Thr78, Arg125, Arg131, Tyr158, and His182. The Proton acceptor role is filled by Asp258. Residue Asn263 participates in substrate binding.

This sequence belongs to the metallo-dependent hydrolases superfamily. PDC hydrolase family.

The catalysed reaction is 2-oxo-2H-pyran-4,6-dicarboxylate + H2O = (1E)-4-oxobut-1-ene-1,2,4-tricarboxylate + H(+). With respect to regulation, strongly inhibited by 1 mM Zn(2+), Cu(2+), Mn(2+) and Co(2+) ions. Also inhibited by 5,5'-dithiobis(2-nitrobenzoic acid) (Ellman reagent) in vitro. Involved in the degradation of aromatic compounds via the protocatechuate 4,5-cleavage pathway. Catalyzes the hydrolysis of 2-pyrone-4,6-dicarboxylate (PDC) to oxalomesaconate (OMA). Also catalyzes the reverse reaction. This is 2-pyrone-4,6-dicarbaxylate hydrolase from Comamonas testosteroni (Pseudomonas testosteroni).